A 529-amino-acid polypeptide reads, in one-letter code: Scarecrow-like protein 13 (529 aa).

Positions 51-81 (ASGSLPSYDSPSVSITSGRSPFSPQGSQSCI) are enriched in polar residues. Residues 51–84 (ASGSLPSYDSPSVSITSGRSPFSPQGSQSCISDL) form a disordered region. The GRAS domain maps to 146–525 (LLALTPQLDL…RPMATCSVWK (380 aa)). Residues 153 to 213 (LDLKEVLVEA…RARLEGSGSN (61 aa)) form a leucine repeat I (LRI) region. Residues 232-297 (MSVLYEICPY…GGPPLLRVTG (66 aa)) form a VHIID region. Positions 263-267 (VHIID) match the VHIID motif. The interval 313–345 (LVGERLATLAQSCGVPFEFHDAIMSGCKVQREH) is leucine repeat II (LRII). The PFYRE stretch occupies residues 354–448 (VVVNFPYVLH…QHCVARDIVN (95 aa)). Residues 451-525 (ACEESERVER…RPMATCSVWK (75 aa)) form an SAW region.

This sequence belongs to the GRAS family. Expressed in roots, hypocotyls, cotyledons, shoot apex, leaves, flowers and siliques.

Its subcellular location is the cytoplasm. The protein resides in the nucleus. In terms of biological role, probable transcription factor that acts as a positive regulator of continuous red light signals downstream of phytochrome B (phyB). Required for the regulation of hypocotyl elongation during de-etiolation. May be required to modulate phytochrome A (phyA) signal transduction in a phyB-independent way. The sequence is that of Scarecrow-like protein 13 (SCL13) from Arabidopsis thaliana (Mouse-ear cress).